The chain runs to 375 residues: tRNA-specific 2-thiouridylase MnmA (375 aa).

Residues 12–19 and Met-38 contribute to the ATP site; that span reads GMSGGVDS. The interval 98 to 100 is interaction with target base in tRNA; the sequence is NPD. Cys-103 (nucleophile) is an active-site residue. A disulfide bond links Cys-103 and Cys-200. Gly-127 provides a ligand contact to ATP. The tract at residues 150-152 is interaction with tRNA; sequence KDQ. Cys-200 (cysteine persulfide intermediate) is an active-site residue. An interaction with tRNA region spans residues 312–313; it reads RY.

Belongs to the MnmA/TRMU family.

The protein localises to the cytoplasm. It catalyses the reaction S-sulfanyl-L-cysteinyl-[protein] + uridine(34) in tRNA + AH2 + ATP = 2-thiouridine(34) in tRNA + L-cysteinyl-[protein] + A + AMP + diphosphate + H(+). In terms of biological role, catalyzes the 2-thiolation of uridine at the wobble position (U34) of tRNA, leading to the formation of s(2)U34. The chain is tRNA-specific 2-thiouridylase MnmA from Lactobacillus johnsonii (strain CNCM I-12250 / La1 / NCC 533).